The sequence spans 251 residues: NADPH-dependent oxidoreductase (251 aa).

The protein belongs to the flavin oxidoreductase frp family. FMN serves as cofactor.

Functionally, reduces FMN, organic nitro compounds and disulfide DTNB. Involved in maintenance of the cellular redox state and the disulfide stress response. This Staphylococcus aureus (strain MRSA252) protein is NADPH-dependent oxidoreductase (nfrA).